An 868-amino-acid polypeptide reads, in one-letter code: B-cell receptor CD22 (868 aa).

A signal peptide spans 1–21; the sequence is MRVHYLWLLLILGHVASARYS. The 127-residue stretch at 22–148 folds into the Ig-like V-type domain; the sequence is SANDWTVDHP…MEPIHLNVSE (127 aa). Over 22-708 the chain is Extracellular; sequence SANDWTVDHP…YYSPETIGKR (687 aa). Cystine bridges form between C41–C177, C46–C112, and C171–C235. N-linked (GlcNAc...) asparagine glycosylation is found at N111 and N122. R130 is a binding site for N-acetylneuraminate. Residues N145, N174, N271, N281, N384, N414, N466, N567, and N595 are each glycosylated (N-linked (GlcNAc...) asparagine). Ig-like C2-type domains lie at 153–250, 257–347, 352–435, 440–521, 526–603, and 614–697; these read PYIQ…RTVR, PKLE…VELT, PEPS…AKLD, PKAV…VILN, PRDV…ETLS, and PRRL…STLT. 4 cysteine pairs are disulfide-bonded: C278–C330, C374–C417, C463–C505, and C550–C592. An intrachain disulfide couples C637 to C680. Residues 709-727 form a helical membrane-spanning segment; it reads VALGLGFCLTICILAIWGM. Over 728–868 the chain is Cytoplasmic; that stretch reads KIQKKWKQNR…EDVDYVTLKH (141 aa). Residues 738–752 are compositionally biased toward polar residues; it reads SQQGLQENSSGQSFF. A disordered region spans residues 738 to 772; sequence SQQGLQENSSGQSFFVRNKKARRTPLSEGPQSQGC. A phosphoserine mark is found at S746, S747, and S750. The ITIM motif 1 motif lies at 781 to 786; it reads VSYAIL. Y783 carries the phosphotyrosine modification. The segment at 790–812 is disordered; that stretch reads ESDTHNTGDAGTPATQAPPPNNS. Y828, Y843, and Y863 each carry phosphotyrosine. 2 short sequence motifs (ITIM motif) span residues 841–846 and 861–866; these read IHYSEL and VDYVTL.

Belongs to the immunoglobulin superfamily. SIGLEC (sialic acid binding Ig-like lectin) family. In terms of assembly, predominantly monomer of isoform CD22-beta. Also found as heterodimer of isoform CD22-beta and a shorter isoform. Interacts with PTPN6/SHP-1, LYN, SYK, PIK3R1/PIK3R2 and PLCG1 upon phosphorylation. Interacts with GRB2, INPP5D and SHC1 upon phosphorylation. May form a complex with INPP5D/SHIP, GRB2 and SHC1. Phosphorylated on tyrosine residues by LYN. In terms of processing, phosphorylation of Tyr-783 and Tyr-843 are involved in binding to SYK. Phosphorylation of Tyr-828 is involved in binding to GRB2. Phosphorylation of Tyr-863 is involved in binding to SYK, PLCG2 and PIK3R1/PIK3R2. In terms of tissue distribution, B-lymphocytes.

It is found in the cell membrane. Functionally, most highly expressed siglec (sialic acid-binding immunoglobulin-like lectin) on B-cells that plays a role in various aspects of B-cell biology including differentiation, antigen presentation, and trafficking to bone marrow. Binds to alpha 2,6-linked sialic acid residues of surface molecules such as CD22 itself, CD45 and IgM in a cis configuration. Can also bind to ligands on other cells as an adhesion molecule in a trans configuration. Acts as an inhibitory coreceptor on the surface of B-cells and inhibits B-cell receptor induced signaling, characterized by inhibition of the calcium mobilization and cellular activation. Mechanistically, the immunoreceptor tyrosine-based inhibitory motif domain is phosphorylated by the Src kinase LYN, which in turn leads to the recruitment of the protein tyrosine phosphatase 1/PTPN6, leading to the negative regulation of BCR signaling. If this negative signaling from is of sufficient strength, apoptosis of the B-cell can be induced. The sequence is that of B-cell receptor CD22 from Mus musculus (Mouse).